We begin with the raw amino-acid sequence, 240 residues long: MNERDSRNQIGDLPFRVKEGFSVYEFIEQLYEAHVVERINRFLVKVTFNGKEFLAHLHDPGRLKDLIYPGNLVLIRETKGYKTKFSITAAYSNSRFVVLDSRLHNIIASKFLPEAYEKEIKVGNSRIDFKYDNTYLEVKGCTLVENEIAYFPDAPTERGRRHLKELRELMKKGFNSILLILVMRDDAKCFLPNEKTDPKFSIEFWNSINEGLNVNIKTFKLVGNKIIYVRDIPLCKTNLT.

The protein belongs to the SfsA family.

The chain is Sugar fermentation stimulation protein homolog from Saccharolobus islandicus (strain L.S.2.15 / Lassen #1) (Sulfolobus islandicus).